The primary structure comprises 559 residues: MNNNIVNLVAAIVLSLGIIFGWQYFIVKPQQQKQQQQIALQKAKDLKKKESAQLEATPVIVQEASQAPRIKIDSNALSGSISLKGLRFDDLILKKYKQDLSENSPEVVLFSPSDTKDAYFAEIGWVSNLSSVKLPNNETIWNSDSEILTPEKPVNLFWVNEDGVKFLVAITVDENYLFTIEQTIVNNSNQELPVQSYGLINRKYTAVEKAVNILHQGPIGCIDENLKEYSYDDIKDKKSEKFSASKVDWIGITDKYWLTSLIPDKSSNYSSNFNYAVKQEVERYQVDFISPVQIVKPGENFSIKGRLFAGAKKVDLLDKYEKQYDIKLFDRAIDFGWFYIITKPVFYAMNFFYKYVGNFGISILIVTVIIKLLMFTLANKSYRSMKRMKNLQPEINRIKNLYGDDKARLNQEIMALYKKEKVNPVAGCLPILVQIPVFFSIYKVLYVTIEMRQAPFYGWIKDLSAPDPTSIFNLFGLLHFSLPSFLMIGAWPILMAITMFLQQRMSPEPADPVQAQVMKFMPLVFLVMFSSFPAGLLIYWSWNNILSIIQQYYINKLDK.

The next 6 membrane-spanning stretches (helical) occupy residues 5–25 (IVNL…WQYF), 332–352 (AIDF…MNFF), 355–375 (YVGN…LLMF), 429–449 (LPIL…YVTI), 474–494 (LFGL…WPIL), and 520–540 (FMPL…LIYW).

Belongs to the OXA1/ALB3/YidC family. Type 1 subfamily. As to quaternary structure, interacts with the Sec translocase complex via SecD. Specifically interacts with transmembrane segments of nascent integral membrane proteins during membrane integration.

The protein localises to the cell inner membrane. Required for the insertion and/or proper folding and/or complex formation of integral membrane proteins into the membrane. Involved in integration of membrane proteins that insert both dependently and independently of the Sec translocase complex, as well as at least some lipoproteins. Aids folding of multispanning membrane proteins. The chain is Membrane protein insertase YidC from Rickettsia bellii (strain OSU 85-389).